A 263-amino-acid polypeptide reads, in one-letter code: Apolipoprotein A-I (263 aa).

The N-terminal stretch at 1–18 (MKAVVLAVAVLFLTGSQA) is a signal peptide. Repeat copies occupy residues 66-87 (LKLL…SELG) and 88-109 (PVTQ…QEMN). Residues 66–263 (LKLLDNWDTL…DEVSKKLSAQ (198 aa)) form a 10 X approximate tandem repeats region. At M108 the chain carries Methionine sulfoxide. The 3; half-length repeat unit spans residues 110-120 (KDLVEVKEKVQ). 5 consecutive repeat copies span residues 121–142 (PYLK…KKVE), 143–164 (PLGT…EKLT), 165–186 (PLGE…AQLG), 187–206 (PYSD…LKDS), and 207–228 (ASLA…EKAK). The 9; half-length repeat unit spans residues 229–239 (PALEDLRLGLL). Copy 10 of the repeat occupies 240-263 (PVLESLKASFLSSIDEVSKKLSAQ).

The protein belongs to the apolipoprotein A1/A4/E family. In terms of assembly, homodimer. Interacts with APOA1BP and CLU. Component of a sperm activating protein complex (SPAP), consisting of APOA1, an immunoglobulin heavy chain, an immunoglobulin light chain and albumin. Interacts with NDRG1. Interacts with SCGB3A2. Interacts with NAXE and YJEFN3. Glycosylated. In terms of processing, palmitoylated. Post-translationally, phosphorylation sites are present in the extracellular medium.

Its subcellular location is the secreted. Participates in the reverse transport of cholesterol from tissues to the liver for excretion by promoting cholesterol efflux from tissues and by acting as a cofactor for the lecithin cholesterol acyltransferase (LCAT). As part of the SPAP complex, activates spermatozoa motility. The polypeptide is Apolipoprotein A-I (APOA1) (Octodon degus (Degu)).